The sequence spans 217 residues: Ribose-5-phosphate isomerase A (217 aa).

Residues 28 to 31 (TGST), 81 to 84 (DGAD), and 94 to 97 (KGGG) contribute to the substrate site. Glu-103 serves as the catalytic Proton acceptor. Lys-121 lines the substrate pocket.

The protein belongs to the ribose 5-phosphate isomerase family. As to quaternary structure, homodimer.

It catalyses the reaction aldehydo-D-ribose 5-phosphate = D-ribulose 5-phosphate. It participates in carbohydrate degradation; pentose phosphate pathway; D-ribose 5-phosphate from D-ribulose 5-phosphate (non-oxidative stage): step 1/1. In terms of biological role, catalyzes the reversible conversion of ribose-5-phosphate to ribulose 5-phosphate. The sequence is that of Ribose-5-phosphate isomerase A from Aeromonas salmonicida (strain A449).